Here is a 156-residue protein sequence, read N- to C-terminus: Putative pre-16S rRNA nuclease (156 aa).

The protein belongs to the YqgF nuclease family.

The protein localises to the cytoplasm. Could be a nuclease involved in processing of the 5'-end of pre-16S rRNA. The chain is Putative pre-16S rRNA nuclease from Gloeobacter violaceus (strain ATCC 29082 / PCC 7421).